The following is a 209-amino-acid chain: uncharacterized protein (209 aa).

The Nudix hydrolase domain maps to 1–167; the sequence is MRNSAGLFMI…LNTYASSNYG (167 aa).

This is an uncharacterized protein from Orgyia pseudotsugata (Douglas-fir tussock moth).